A 205-amino-acid chain; its full sequence is Putative 3-methyladenine DNA glycosylase (205 aa).

The protein belongs to the DNA glycosylase MPG family.

The protein is Putative 3-methyladenine DNA glycosylase of Clostridium acetobutylicum (strain ATCC 824 / DSM 792 / JCM 1419 / IAM 19013 / LMG 5710 / NBRC 13948 / NRRL B-527 / VKM B-1787 / 2291 / W).